The chain runs to 171 residues: MEIILIKPVRKLGKIGDILKVADGFGRNYLLPQKLAIRATEPNKELIVKQKHEFEAKDKQIREEVEKINALIKEQKLVFIRQTSDDGKLFGSITNKEIADKLSENVSYNIFHSNIILDKKIKSTGIYTVEIRLHAELNAIVTVIVARSESEVQDYLREQKNESLETLAESA.

The protein belongs to the bacterial ribosomal protein bL9 family.

Functionally, binds to the 23S rRNA. This Rickettsia canadensis (strain McKiel) protein is Large ribosomal subunit protein bL9.